Consider the following 356-residue polypeptide: 3-isopropylmalate dehydrogenase (356 aa).

Residues Arg91, Arg101, Arg129, and Asp223 each contribute to the substrate site. The Mg(2+) site is built by Asp223, Asp247, and Asp251. 281 to 293 (GSAPDIAGKGIAN) serves as a coordination point for NAD(+).

It belongs to the isocitrate and isopropylmalate dehydrogenases family. LeuB type 1 subfamily. Homodimer. Mg(2+) serves as cofactor. It depends on Mn(2+) as a cofactor.

The protein localises to the cytoplasm. It carries out the reaction (2R,3S)-3-isopropylmalate + NAD(+) = 4-methyl-2-oxopentanoate + CO2 + NADH. It participates in amino-acid biosynthesis; L-leucine biosynthesis; L-leucine from 3-methyl-2-oxobutanoate: step 3/4. Its function is as follows. Catalyzes the oxidation of 3-carboxy-2-hydroxy-4-methylpentanoate (3-isopropylmalate) to 3-carboxy-4-methyl-2-oxopentanoate. The product decarboxylates to 4-methyl-2 oxopentanoate. This Ralstonia nicotianae (strain ATCC BAA-1114 / GMI1000) (Ralstonia solanacearum) protein is 3-isopropylmalate dehydrogenase.